The sequence spans 198 residues: Patulin synthesis protein F (198 aa).

A signal peptide spans 1-18 (MRLSTVLLGSLLGALTQA). N-linked (GlcNAc...) asparagine glycosylation is found at Asn-128 and Asn-184.

This sequence belongs to the patF family.

It is found in the cytoplasm. It localises to the cytosol. The catalysed reaction is phyllostine = neopatulin. It participates in mycotoxin biosynthesis; patulin biosynthesis. In terms of biological role, part of the gene cluster that mediates the biosynthesis of patulin, an acetate-derived tetraketide mycotoxin produced by several fungal species that shows antimicrobial properties against several bacteria. PatF catalyzes the conversion of phyllostine into neopatulin. The pathway begins with the synthesis of 6-methylsalicylic acid by the polyketide synthase (PKS) patK via condensation of acetate and malonate units. The 6-methylsalicylic acid decarboxylase patG then catalyzes the decarboxylation of 6-methylsalicylic acid to yield m-cresol (also known as 3-methylphenol). These first reactions occur in the cytosol. The intermediate m-cresol is then transported into the endoplasmic reticulum where the cytochrome P450 monooxygenase patH converts it to m-hydroxybenzyl alcohol, which is further converted to gentisyl alcohol by the cytochrome P450 monooxygenase patI. The oxidoreductases patJ and patO further convert gentisyl alcohol to isoepoxydon in the vacuole. PatN catalyzes then the transformation of isoepoxydon into phyllostine. The cluster protein patF is responsible for the conversion from phyllostine to neopatulin whereas the alcohol dehydrogenase patD converts neopatulin to E-ascladiol. The steps between isoepoxydon and E-ascladiol occur in the cytosol, and E-ascladiol is probably secreted to the extracellular space by one of the cluster-specific transporters patC or patM. Finally, the secreted patulin synthase patE catalyzes the conversion of E-ascladiol to patulin. This Aspergillus clavatus (strain ATCC 1007 / CBS 513.65 / DSM 816 / NCTC 3887 / NRRL 1 / QM 1276 / 107) protein is Patulin synthesis protein F.